Consider the following 278-residue polypeptide: Envelope glycoprotein L (278 aa).

The N-terminal stretch at 1-30 is a signal peptide; it reads MCRRPDCGFSFSPGPVILLWCCLLLPIVSS. The 214-residue stretch at 43-256 folds into the gL betaherpesvirus-type domain; the sequence is VPAECPELTR…DKYYAGLPPE (214 aa). The cysteines at positions 154 and 159 are disulfide-linked.

It belongs to the herpesviridae glycoprotein L (gL) family. Betaherpesvirinae gL subfamily. As to quaternary structure, interacts with glycoprotein H (gH); this interaction is necessary for the correct processing and cell surface expression of gH. Forms the envelope pentamer complex (PC) composed of gH, gL, UL128, UL130, and UL131A. The pentamer interacts with host NRP2. Forms the envelope trimer complex composed of gH, gL, and gO. The trimer interacts with host PDGFRA.

Its subcellular location is the virion membrane. The protein resides in the host cell membrane. It localises to the host Golgi apparatus. It is found in the host trans-Golgi network. Functionally, the heterodimer glycoprotein H-glycoprotein L is required for the fusion of viral and plasma membranes leading to virus entry into the host cell. Acts as a functional inhibitor of gH and maintains gH in an inhibited form. Upon binding to host integrins, gL dissociates from gH leading to activation of the viral fusion glycoproteins gB and gH. In human cytomegalovirus, forms two distincts complexes to mediate viral entry, a trimer and a pentamer at the surface of the virion envelope. The gH-gL-gO trimer is required for infection in fibroblasts by interacting with host PDGFRA. The gH-gL-UL128-UL130-UL131A pentamer is essential for viral entry in epithelial, endothelial and myeloid cells via interaction with host NRP2. The sequence is that of Envelope glycoprotein L from Human cytomegalovirus (strain PT) (HHV-5).